The primary structure comprises 400 residues: Acetate kinase (400 aa).

N10 lines the Mg(2+) pocket. An ATP-binding site is contributed by K17. R91 lines the substrate pocket. D150 functions as the Proton donor/acceptor in the catalytic mechanism. ATP-binding positions include 210–214 (HLGNG), 285–287 (DCR), and 333–337 (GIGEN). Position 387 (E387) interacts with Mg(2+).

Belongs to the acetokinase family. In terms of assembly, homodimer. It depends on Mg(2+) as a cofactor. Mn(2+) serves as cofactor.

It is found in the cytoplasm. It carries out the reaction acetate + ATP = acetyl phosphate + ADP. It participates in metabolic intermediate biosynthesis; acetyl-CoA biosynthesis; acetyl-CoA from acetate: step 1/2. Catalyzes the formation of acetyl phosphate from acetate and ATP. Can also catalyze the reverse reaction. This chain is Acetate kinase, found in Proteus mirabilis (strain HI4320).